A 692-amino-acid chain; its full sequence is Elongation factor G (692 aa).

Residues 8–282 enclose the tr-type G domain; it reads ERTRNIGIMA…AIVDYLPAPT (275 aa). Residues 17-24, 81-85, and 135-138 each bind GTP; these read AHIDAGKT, DTPGH, and NKMD.

This sequence belongs to the TRAFAC class translation factor GTPase superfamily. Classic translation factor GTPase family. EF-G/EF-2 subfamily.

The protein resides in the cytoplasm. Functionally, catalyzes the GTP-dependent ribosomal translocation step during translation elongation. During this step, the ribosome changes from the pre-translocational (PRE) to the post-translocational (POST) state as the newly formed A-site-bound peptidyl-tRNA and P-site-bound deacylated tRNA move to the P and E sites, respectively. Catalyzes the coordinated movement of the two tRNA molecules, the mRNA and conformational changes in the ribosome. The chain is Elongation factor G from Desulforamulus reducens (strain ATCC BAA-1160 / DSM 100696 / MI-1) (Desulfotomaculum reducens).